The primary structure comprises 409 residues: 5-aminolevulinate synthase (409 aa).

Positions 21, 137, and 156 each coordinate substrate. Pyridoxal 5'-phosphate contacts are provided by Ser189, His217, and Thr245. Lys248 is a catalytic residue. An N6-(pyridoxal phosphate)lysine modification is found at Lys248. Pyridoxal 5'-phosphate-binding residues include Thr277 and Thr278. Substrate is bound at residue Thr365.

Belongs to the class-II pyridoxal-phosphate-dependent aminotransferase family. As to quaternary structure, homodimer. It depends on pyridoxal 5'-phosphate as a cofactor.

The catalysed reaction is succinyl-CoA + glycine + H(+) = 5-aminolevulinate + CO2 + CoA. Its pathway is porphyrin-containing compound metabolism; protoporphyrin-IX biosynthesis; 5-aminolevulinate from glycine: step 1/1. This chain is 5-aminolevulinate synthase (hemA), found in Paracoccus denitrificans (strain Pd 1222).